A 381-amino-acid chain; its full sequence is Pre-mRNA-splicing factor cwf28 (381 aa).

The tract at residues methionine 1–leucine 21 is disordered. Serine 11 and serine 13 each carry phosphoserine. Residues alanine 104–asparagine 157 are a coiled coil. Residues leucine 262–leucine 381 form a disordered region. Residues lysine 274–serine 285 are compositionally biased toward polar residues. Phosphoserine occurs at positions 275 and 277. Basic and acidic residues-rich tracts occupy residues leucine 287–leucine 297, lysine 306–serine 332, and serine 362–tyrosine 375.

It belongs to the SPP2 family. In terms of assembly, belongs to the 40S cdc5-associated complex (or cwf complex), a spliceosome sub-complex reminiscent of a late-stage spliceosome composed of the U2, U5 and U6 snRNAs and at least brr2, cdc5, cwf2/prp3, cwf3/syf1, cwf4/syf3, cwf5/ecm2, spp42/cwf6, cwf7/spf27, cwf8, cwf9, cwf10, cwf11, cwf12, prp45/cwf13, cwf14, cwf15, cwf16, cwf17, cwf18, cwf19, cwf20, cwf21, cwf22, cwf23, cwf24, cwf25, cwf26, cyp7/cwf27, cwf28, cwf29/ist3, lea1, msl1, prp5/cwf1, prp10, prp12/sap130, prp17, prp22, sap61, sap62, sap114, sap145, slu7, smb1, smd1, smd3, smf1, smg1 and syf2.

Its subcellular location is the nucleus. Involved in spliceosome maturation and the first step of pre-mRNA splicing. The protein is Pre-mRNA-splicing factor cwf28 (cwf28) of Schizosaccharomyces pombe (strain 972 / ATCC 24843) (Fission yeast).